Here is a 308-residue protein sequence, read N- to C-terminus: ATP synthase gamma chain (308 aa).

The protein belongs to the ATPase gamma chain family. F-type ATPases have 2 components, CF(1) - the catalytic core - and CF(0) - the membrane proton channel. CF(1) has five subunits: alpha(3), beta(3), gamma(1), delta(1), epsilon(1). CF(0) has three main subunits: a, b and c.

The protein localises to the cell inner membrane. Produces ATP from ADP in the presence of a proton gradient across the membrane. The gamma chain is believed to be important in regulating ATPase activity and the flow of protons through the CF(0) complex. The sequence is that of ATP synthase gamma chain from Salinibacter ruber (strain DSM 13855 / M31).